We begin with the raw amino-acid sequence, 240 residues long: tRNA (guanine-N(1)-)-methyltransferase (240 aa).

S-adenosyl-L-methionine contacts are provided by residues G111 and 130 to 135 (IGDYVI).

The protein belongs to the RNA methyltransferase TrmD family. Homodimer.

The protein resides in the cytoplasm. The enzyme catalyses guanosine(37) in tRNA + S-adenosyl-L-methionine = N(1)-methylguanosine(37) in tRNA + S-adenosyl-L-homocysteine + H(+). Functionally, specifically methylates guanosine-37 in various tRNAs. In Mycoplasma capricolum subsp. capricolum (strain California kid / ATCC 27343 / NCTC 10154), this protein is tRNA (guanine-N(1)-)-methyltransferase.